Consider the following 770-residue polypeptide: Amyloid-beta precursor protein (770 aa).

Positions 1–17 (MLPSLALLLLAAWTVRA) are cleaved as a signal peptide. Topologically, residues 18-701 (LEVPTDGNAG…AEDVGSNKGA (684 aa)) are extracellular. Residues 28–123 (LLAEPQIAMF…PYRCLVGEFV (96 aa)) are GFLD subdomain. One can recognise an E1 domain in the interval 28–189 (LLAEPQIAMF…RGVEFVCCPL (162 aa)). 6 cysteine pairs are disulfide-bonded: Cys38–Cys62, Cys73–Cys117, Cys98–Cys105, Cys133–Cys187, Cys144–Cys174, and Cys158–Cys186. Residue 96–110 (NWCKRGRKQCKTHTH) coordinates heparin. The segment at 131-189 (DKCKFLHQERMDVCETHLHWHTVAKETCSEKSTNLHDYGMLLPCGIDKFRGVEFVCCPL) is cuBD subdomain. The interval 135 to 155 (FLHQERMDVCETHLHWHTVAK) is copper-binding. Residues His147, His151, and Tyr168 each contribute to the Cu(2+) site. Residues 181–188 (GVEFVCCP) form a zinc-binding region. The Zn(2+) site is built by Glu183, Cys186, and Cys187. Over residues 196–207 (IDSADAEEDDSD) the composition is skewed to acidic residues. Positions 196–283 (IDSADAEEDD…TTTTTTTESV (88 aa)) are disordered. The residue at position 198 (Ser198) is a Phosphoserine; by CK2. Position 206 is a phosphoserine; by CK1 (Ser206). 2 positions are modified to sulfotyrosine: Tyr217 and Tyr262. Acidic residues predominate over residues 228-264 (VAEEEEVADVEEEEAEDDEDVEDGDEVEEEAEEPYEE). Residues 268 to 281 (RTTSIATTTTTTTE) are compositionally biased toward low complexity. Intrachain disulfides connect Cys291–Cys341, Cys300–Cys324, and Cys316–Cys337. The BPTI/Kunitz inhibitor domain occupies 291-341 (CSEQAETGPCRAMISRWYFDVTEGKCAPFFYGGCGGNRNNFDTEEYCMAVC). Tyr336 bears the Sulfotyrosine mark. The short motif at 344–365 (VSSQSLLKTTSEPLPQDPVKLP) is the OX-2 element. An E2 domain is found at 374 to 565 (AVDKYLETPG…EEIQDEVDEL (192 aa)). The tract at residues 391 to 423 (FQKAKERLEAKHRERMSQVMREWEEAERQAKNL) is heparin-binding. Residue Ser441 is modified to Phosphoserine. Positions 491-522 (FNMLKKYVRAEQKDRQHTLKHFEHVRMVDPKK) are heparin-binding. The residue at position 497 (Tyr497) is a Phosphotyrosine. Residues 523–540 (AAQIRSQVMTHLRVIYER) form a collagen-binding region. N-linked (GlcNAc...) asparagine glycans are attached at residues Asn542 and Asn571. A glycan (O-linked (Xyl...) (chondroitin sulfate) serine; in L-APP isoforms) is linked at Ser656. His677 and His685 together coordinate Cu(2+). Positions 677 and 685 each coordinate Zn(2+). Positions 695–722 (VGSNKGAIIGLMVGGVVIATVIVITLVM) are interaction with PSEN1. Residues 702-722 (IIGLMVGGVVIATVIVITLVM) traverse the membrane as a helical segment. The Cytoplasmic segment spans residues 723–770 (LKKKQYTSIHHGVVEVDAAVTPEERHLSKMQQNGYENPTYKFFEQMQN). The short motif at 724-734 (KKKQYTSIHHG) is the Basolateral sorting signal element. A Phosphothreonine modification is found at Thr729. Ser730 is modified (phosphoserine; by APP-kinase I). Residues 732–751 (HHGVVEVDAAVTPEERHLSK) form an interaction with G(o)-alpha region. Thr743 carries the phosphothreonine; by CDK5 and MAPK10 modification. The segment at 756-770 (GYENPTYKFFEQMQN) is required for the interaction with KIF5B and for anterograde transport in axons. Tyr757 carries the phosphotyrosine; by ABL1 modification. A YENPXY motif; contains endocytosis signal motif is present at residues 757–762 (YENPTY). Lys763 is covalently cross-linked (Glycyl lysine isopeptide (Lys-Gly) (interchain with G-Cter in ubiquitin)).

This sequence belongs to the APP family. As to quaternary structure, binds, via its C-terminus, to the PID domain of several cytoplasmic proteins, including APBB family members, the APBA family, MAPK8IP1, SHC1 and NUMB and DAB1. Binding to DAB1 inhibits its serine phosphorylation. Interacts (via NPXY motif) with DAB2 (via PID domain); the interaction is impaired by tyrosine phosphorylation of the NPXY motif. Also interacts with GPCR-like protein BPP, APPBP1, IB1, KNS2 (via its TPR domains), APPBP2 (via BaSS) and DDB1. In vitro, it binds MAPT via the MT-binding domains. Associates with microtubules in the presence of ATP and in a kinesin-dependent manner. Interacts, through a C-terminal domain, with GNAO1. Amyloid-beta protein 42 binds CHRNA7 in hippocampal neurons. Amyloid-beta associates with HADH2. Interacts with CPEB1, ANKS1B and AGER. Interacts with ITM2B. Interacts with ITM2C. Interacts with IDE. Can form homodimers; dimerization is enhanced in the presence of Cu(2+) ions. Can form homodimers; this is promoted by heparin binding. Amyloid-beta protein 40 interacts with S100A9. CTF-alpha product of APP interacts with GSAP. Isoform APP695 interacts with SORL1 (via N-terminal ectodomain); this interaction retains APP in the trans-Golgi network and reduces processing into soluble APP-alpha and amyloid-beta peptides. The C99 fragment also interacts with SORL1. Isoform APP751 interacts with SORL1. Isoform APP770 interacts with SORL1. Interacts with PLD3. Interacts with VDAC1. Interacts with NSG1; could regulate APP processing. Amyloid-beta protein 42 interacts with FPR2. Interacts with SYT7. Interacts (via transmembrane region) with PSEN1; the interaction is direct. Interacts with LRRK2. Interacts (via cytoplasmic domain) with KIF5B. Interacts (via C-terminus) with APBB2/FE65L1 (via C-terminus). Interacts (via intracellular domain) with APBB3. In terms of processing, proteolytically processed under normal cellular conditions. Cleavage either by alpha-secretase, beta-secretase or theta-secretase leads to generation and extracellular release of soluble APP peptides, S-APP-alpha and S-APP-beta, and the retention of corresponding membrane-anchored C-terminal fragments, C80, C83 and C99. Subsequent processing of C80 and C83 by gamma-secretase yields P3 peptides. This is the major secretory pathway and is non-amyloidogenic. Alternatively, presenilin/nicastrin-mediated gamma-secretase processing of C99 releases the amyloid-beta proteins, amyloid-beta protein 40 and amyloid-beta protein 42, major components of amyloid plaques, and the cytotoxic C-terminal fragments, gamma-CTF(50), gamma-CTF(57) and gamma-CTF(59). PSEN1 cleavage is more efficient with C83 than with C99 as substrate (in vitro). Amyloid-beta protein 40 and Amyloid-beta protein 42 are cleaved by ACE. Many other minor amyloid-beta peptides, amyloid-beta 1-X peptides, are found in cerebral spinal fluid (CSF) including the amyloid-beta X-15 peptides, produced from the cleavage by alpha-secretase. Proteolytically cleaved by caspases during neuronal apoptosis. Cleavage at Asp-739 by either caspase-3, -8 or -9 results in the production of the neurotoxic C31 peptide and the increased production of amyloid-beta peptides. Post-translationally, N-glycosylated. In terms of processing, O-glycosylated. O-linkage of chondroitin sulfate to the L-APP isoforms produces the APP proteoglycan core proteins, the appicans. The chondroitin sulfate chain of appicans contains 4-O-sulfated galactose in the linkage region and chondroitin sulfate E in the repeated disaccharide region. Phosphorylation in the C-terminal on tyrosine, threonine and serine residues is neuron-specific. Phosphorylation can affect APP processing, neuronal differentiation and interaction with other proteins. Phosphorylated on Thr-743 in neuronal cells by Cdc5 kinase and Mapk10, in dividing cells by Cdc2 kinase in a cell-cycle dependent manner with maximal levels at the G2/M phase and, in vitro, by GSK-3-beta. The Thr-743 phosphorylated form causes a conformational change which reduces binding of Fe65 family members. In dopaminergic (DA) neurons, phosphorylation on Thr-743 by LRKK2 promotes the production and the nuclear translocation of the APP intracellular domain (AICD) which induces DA neuron apoptosis. Phosphorylation on Tyr-757 is required for SHC binding. Phosphorylated in the extracellular domain by casein kinases on both soluble and membrane-bound APP. This phosphorylation is inhibited by heparin. Post-translationally, extracellular binding and reduction of copper, results in a corresponding oxidation of Cys-144 and Cys-158, and the formation of a disulfide bond. In terms of processing, trophic-factor deprivation triggers the cleavage of surface APP by beta-secretase to release sAPP-beta which is further cleaved to release an N-terminal fragment of APP (N-APP). Amyloid-beta peptides are degraded by IDE. Post-translationally, sulfated on tyrosine residues. Expressed in the brain. In the brain, non-L-APP isoforms are expressed in neurons, isoform APP695 being the predominant form. In astrocytes and microglial cells, almost 50% is L-isoform (appican).

The protein resides in the cell membrane. Its subcellular location is the membrane. It localises to the perikaryon. The protein localises to the cell projection. It is found in the growth cone. The protein resides in the clathrin-coated pit. Its subcellular location is the early endosome. It localises to the cytoplasmic vesicle. The protein localises to the endoplasmic reticulum. It is found in the golgi apparatus. The protein resides in the cell surface. Its subcellular location is the nucleus. It localises to the cytoplasm. The protein localises to the secreted. Functions as a cell surface receptor and performs physiological functions on the surface of neurons relevant to neurite growth, neuronal adhesion and axonogenesis. Interaction between APP molecules on neighboring cells promotes synaptogenesis. Involved in cell mobility and transcription regulation through protein-protein interactions. Can promote transcription activation through binding to APBB1-KAT5 and inhibit Notch signaling through interaction with Numb. Couples to apoptosis-inducing pathways such as those mediated by G(o) and JIP. Inhibits G(o)-alpha ATPase activity. Acts as a kinesin I membrane receptor, mediating the axonal transport of beta-secretase and presenilin 1. By acting as a kinesin I membrane receptor, plays a role in axonal anterograde transport of cargo towards synapses in axons. May be involved in copper homeostasis/oxidative stress through copper ion reduction. Can regulate neurite outgrowth through binding to components of the extracellular matrix such as heparin and collagen I and IV. The splice isoforms that contain the BPTI domain possess protease inhibitor activity. Induces a AGER-dependent pathway that involves activation of p38 MAPK, resulting in internalization of amyloid-beta peptide and leading to mitochondrial dysfunction in cultured mitochondrial dysfunction in cultured cortical neurons. Provides Cu(2+) ions for GPC1 which are required for release of nitric oxide (NO) and subsequent degradation of the heparan sulfate chains on GPC1. Its function is as follows. Amyloid-beta peptides are lipophilic metal chelators with metal-reducing activity. Binds transient metals such as copper, zinc and iron. Rat and mouse amyloid-beta peptides bind only weakly transient metals and have little reducing activity due to substitutions of transient metal chelating residues. Amyloid-beta protein 42 may activate mononuclear phagocytes in the brain and elicits inflammatory responses. Promotes both tau aggregation and TPK II-mediated phosphorylation. Also binds GPC1 in lipid rafts. Functionally, appicans elicit adhesion of neural cells to the extracellular matrix and may regulate neurite outgrowth in the brain. In terms of biological role, the gamma-CTF peptides as well as the caspase-cleaved peptides, including C31, are potent enhancers of neuronal apoptosis. In Rattus norvegicus (Rat), this protein is Amyloid-beta precursor protein.